The following is a 619-amino-acid chain: Kinesin light chain 4 (619 aa).

The residue at position 2 (Ser-2) is an N-acetylserine. A TPR 1 repeat occupies 55 to 88 (QQGGHEEGLVHEKARQLRRSMENIELGLSEAQVM). A coiled-coil region spans residues 65 to 155 (HEKARQLRRS…HLEFLRQLRQ (91 aa)). Over residues 156 to 175 (YDEDGHGMEEKEGEATKDSL) the composition is skewed to basic and acidic residues. A disordered region spans residues 156-199 (YDEDGHGMEEKEGEATKDSLDDLFPNEEEEDSGNDLSRGQGAAA). Position 174 is a phosphoserine (Ser-174). Residues 179 to 188 (FPNEEEEDSG) show a composition bias toward acidic residues. 5 TPR repeats span residues 211 to 244 (LRTL…LERT), 253 to 286 (ATML…REST), 295 to 328 (AATL…REKV), 337 to 370 (AKQL…YESQ), and 379 to 412 (ARTK…AHVQ). Residue Ser-460 is modified to Phosphoserine. The TPR 7 repeat unit spans residues 464–497 (NTTLKNLGALYRRQGKLEAAETLEECALRSRKQG). Phosphoserine is present on residues Ser-565, Ser-566, and Ser-590. The interval 571 to 619 (RKLQGTEPRPSSSSMKRAASLNYLNQPNAAPLQVSRGLSASTVDLSSSS) is disordered. The segment covering 609–619 (SASTVDLSSSS) has biased composition (low complexity). The residue at position 612 (Thr-612) is a Phosphothreonine.

This sequence belongs to the kinesin light chain family. Oligomeric complex composed of two heavy chains and two light chains.

The protein resides in the cytoplasm. It is found in the cytoskeleton. Kinesin is a microtubule-associated force-producing protein that may play a role in organelle transport. The light chain may function in coupling of cargo to the heavy chain or in the modulation of its ATPase activity. The polypeptide is Kinesin light chain 4 (Klc4) (Mus musculus (Mouse)).